Here is a 349-residue protein sequence, read N- to C-terminus: Cobalt-precorrin-5B C(1)-methyltransferase (349 aa).

It belongs to the CbiD family.

The catalysed reaction is Co-precorrin-5B + S-adenosyl-L-methionine = Co-precorrin-6A + S-adenosyl-L-homocysteine. The protein operates within cofactor biosynthesis; adenosylcobalamin biosynthesis; cob(II)yrinate a,c-diamide from sirohydrochlorin (anaerobic route): step 6/10. Catalyzes the methylation of C-1 in cobalt-precorrin-5B to form cobalt-precorrin-6A. The polypeptide is Cobalt-precorrin-5B C(1)-methyltransferase (Saccharolobus islandicus (strain L.S.2.15 / Lassen #1) (Sulfolobus islandicus)).